Consider the following 162-residue polypeptide: NAD(P)H-quinone oxidoreductase subunit N (162 aa).

The protein belongs to the complex I NdhN subunit family. As to quaternary structure, NDH-1 can be composed of about 15 different subunits; different subcomplexes with different compositions have been identified which probably have different functions.

Its subcellular location is the cellular thylakoid membrane. It carries out the reaction a plastoquinone + NADH + (n+1) H(+)(in) = a plastoquinol + NAD(+) + n H(+)(out). The enzyme catalyses a plastoquinone + NADPH + (n+1) H(+)(in) = a plastoquinol + NADP(+) + n H(+)(out). Functionally, NDH-1 shuttles electrons from an unknown electron donor, via FMN and iron-sulfur (Fe-S) centers, to quinones in the respiratory and/or the photosynthetic chain. The immediate electron acceptor for the enzyme in this species is believed to be plastoquinone. Couples the redox reaction to proton translocation, and thus conserves the redox energy in a proton gradient. Cyanobacterial NDH-1 also plays a role in inorganic carbon-concentration. This chain is NAD(P)H-quinone oxidoreductase subunit N, found in Nostoc sp. (strain PCC 7120 / SAG 25.82 / UTEX 2576).